Consider the following 75-residue polypeptide: MSAFWHKIGCCVVAKPPPKKKRRRIDRSMIGEPTNFVHLTHIGSGEMADGMQPSGPIKEQMRSKVPHANGRNSLL.

S-palmitoyl cysteine attachment occurs at residues C10 and C11. The CRIB domain maps to 30–43 (IGEPTNFVHLTHIG). Residues 45–75 (GEMADGMQPSGPIKEQMRSKVPHANGRNSLL) form a disordered region.

The protein belongs to the CDC42SE/SPEC family.

It localises to the cytoplasm. The protein resides in the cytoskeleton. Its subcellular location is the cell membrane. Its function is as follows. Probably involved in the organization of the actin cytoskeleton by acting downstream of CDC42, inducing actin filament assembly. The chain is CDC42 small effector protein 1 (cdc42se1) from Danio rerio (Zebrafish).